Consider the following 500-residue polypeptide: Betaine aldehyde dehydrogenase, chloroplastic (500 aa).

A chloroplast-targeting transit peptide spans 1 to 7 (MSMPIPS). 238–243 (GSSATG) serves as a coordination point for NAD(+). The Proton acceptor role is filled by E260. The active-site Nucleophile is C294.

Belongs to the aldehyde dehydrogenase family. As to quaternary structure, homodimer.

Its subcellular location is the plastid. The protein localises to the chloroplast. The enzyme catalyses betaine aldehyde + NAD(+) + H2O = glycine betaine + NADH + 2 H(+). It participates in amine and polyamine biosynthesis; betaine biosynthesis via choline pathway; betaine from betaine aldehyde: step 1/1. This Beta vulgaris (Sugar beet) protein is Betaine aldehyde dehydrogenase, chloroplastic.